The chain runs to 119 residues: Beta-2-microglobulin (119 aa).

The signal sequence occupies residues 1 to 20; it reads MARFVVAALLVLLSLSGLEA. Positions 25-114 constitute an Ig-like C1-type domain; sequence PKIQVYSRHP…MTFPAPKTVK (90 aa). C45 and C100 are joined by a disulfide.

The protein belongs to the beta-2-microglobulin family. As to quaternary structure, heterodimer of an alpha chain and a beta chain. Beta-2-microglobulin is the beta-chain of major histocompatibility complex class I molecules.

It localises to the secreted. Functionally, component of the class I major histocompatibility complex (MHC). Involved in the presentation of peptide antigens to the immune system. This Pithecia irrorata (Gray monk saki) protein is Beta-2-microglobulin (B2M).